Reading from the N-terminus, the 100-residue chain is NADH-quinone oxidoreductase subunit K (100 aa).

3 helical membrane-spanning segments follow: residues 4 to 24 (LQHGLILAAILFVLGLTGLII), 29 to 49 (LFMLIGLEVMINAAALAFVVV), and 60 to 80 (VMFILAISLAAAEASIGLALL).

It belongs to the complex I subunit 4L family. As to quaternary structure, NDH-1 is composed of 13 different subunits. Subunits NuoA, H, J, K, L, M, N constitute the membrane sector of the complex.

The protein resides in the cell inner membrane. The enzyme catalyses a quinone + NADH + 5 H(+)(in) = a quinol + NAD(+) + 4 H(+)(out). NDH-1 shuttles electrons from NADH, via FMN and iron-sulfur (Fe-S) centers, to quinones in the respiratory chain. The immediate electron acceptor for the enzyme in this species is believed to be ubiquinone. Couples the redox reaction to proton translocation (for every two electrons transferred, four hydrogen ions are translocated across the cytoplasmic membrane), and thus conserves the redox energy in a proton gradient. The chain is NADH-quinone oxidoreductase subunit K from Photorhabdus laumondii subsp. laumondii (strain DSM 15139 / CIP 105565 / TT01) (Photorhabdus luminescens subsp. laumondii).